Consider the following 230-residue polypeptide: 7-cyano-7-deazaguanine synthase (230 aa).

8-18 (LSGGMDSAVVT) provides a ligand contact to ATP. Zn(2+)-binding residues include cysteine 186, cysteine 196, cysteine 199, and cysteine 202.

Belongs to the QueC family. The cofactor is Zn(2+).

It carries out the reaction 7-carboxy-7-deazaguanine + NH4(+) + ATP = 7-cyano-7-deazaguanine + ADP + phosphate + H2O + H(+). Its pathway is purine metabolism; 7-cyano-7-deazaguanine biosynthesis. Catalyzes the ATP-dependent conversion of 7-carboxy-7-deazaguanine (CDG) to 7-cyano-7-deazaguanine (preQ(0)). This Xylella fastidiosa (strain M23) protein is 7-cyano-7-deazaguanine synthase.